The sequence spans 240 residues: Uridylate kinase (240 aa).

ATP is bound at residue 12–15 (KLSG). Gly54 serves as a coordination point for UMP. ATP is bound by residues Gly55 and Arg59. Residues Asp74 and 135-142 (TGNPFFTT) each bind UMP. Positions 162, 168, and 171 each coordinate ATP.

The protein belongs to the UMP kinase family. As to quaternary structure, homohexamer.

The protein localises to the cytoplasm. The catalysed reaction is UMP + ATP = UDP + ADP. Its pathway is pyrimidine metabolism; CTP biosynthesis via de novo pathway; UDP from UMP (UMPK route): step 1/1. Its activity is regulated as follows. Inhibited by UTP. Functionally, catalyzes the reversible phosphorylation of UMP to UDP. The sequence is that of Uridylate kinase from Xanthomonas oryzae pv. oryzae (strain KACC10331 / KXO85).